The sequence spans 1794 residues: Non-reducing polyketide synthase nscA (1794 aa).

Residues 19-256 form an N-terminal acylcarrier protein transacylase domain (SAT) region; the sequence is DLKDLFRRLH…PLPVYDGLCH (238 aa). Residues 389 to 822 enclose the Ketosynthase family 3 (KS3) domain; that stretch reads ASKLAIVGMA…GGNTTVLLED (434 aa). Residues 427–448 form a disordered region; it reads PDRFDLNTHYDPTGKTENATQT. Positions 428–440 are enriched in basic and acidic residues; sequence DRFDLNTHYDPTG. Active-site for beta-ketoacyl synthase activity residues include cysteine 562, histidine 697, and histidine 740. The tract at residues 928-1249 is malonyl-CoA:ACP transacylase (MAT) domain; it reads FTGQGAYYSG…LVTLHLAGLT (322 aa). The tract at residues 1314–1633 is product template (PT) domain; the sequence is TSLVHQITAE…RLLMDRFFSP (320 aa). The segment at 1318–1454 is N-terminal hotdog fold; it reads HQITAETVEA…GVVRFEDPAA (137 aa). One can recognise a PKS/mFAS DH domain in the interval 1318-1628; it reads HQITAETVEA…FRRVPRLLMD (311 aa). Histidine 1350 acts as the Proton acceptor; for dehydratase activity in catalysis. Residues 1482–1628 form a C-terminal hotdog fold region; the sequence is ASKLSKPLAY…FRRVPRLLMD (147 aa). Residue aspartate 1539 is the Proton donor; for dehydratase activity of the active site. Disordered regions lie at residues 1637 to 1665 and 1682 to 1718; these read SHAE…EAPA and ASKS…GDPV. Composition is skewed to polar residues over residues 1644–1655 and 1685–1701; these read QETAPSATSVKK and SEVS…QESP. The 78-residue stretch at 1717-1794 folds into the Carrier domain; that stretch reads PVDAGVVGQC…EMTAWLEEYC (78 aa). An O-(pantetheine 4'-phosphoryl)serine modification is found at serine 1754.

Pantetheine 4'-phosphate serves as cofactor.

It functions in the pathway secondary metabolite biosynthesis. Functionally, non-reducing polyketide synthase; part of the gene cluster that mediates the biosynthesis of neosartoricin, a prenylated anthracenone that exhibits T-cell antiproliferative activity, suggestive of a physiological role as an immunosuppressive agent. The non-reducing polyketide synthase nscA probably synthesizes and cyclizes the decaketide backbone. The hydrolase nscB then mediates the product release through hydrolysis followed by spontaneous decarboxylation. The prenyltransferase nscD catalyzes the addition of the dimethylallyl group to the aromatic C5. The FAD-dependent monooxygenase nscC is then responsible for the stereospecific hydroxylation at C2. There is no gene encoding O-acetyltransferase in the nsc gene cluster; thus, the last step of 2-O-acetylation leading to neosartoricin may be catalyzed by an unidentified O-acetyltransferase. This is Non-reducing polyketide synthase nscA from Neosartorya fischeri (strain ATCC 1020 / DSM 3700 / CBS 544.65 / FGSC A1164 / JCM 1740 / NRRL 181 / WB 181) (Aspergillus fischerianus).